Here is a 318-residue protein sequence, read N- to C-terminus: Leucine-rich repeat domain-containing protein YddK (318 aa).

LRR repeat units follow at residues 109–129, 130–151, 153–173, 174–194, 195–216, 217–237, 238–258, 260–280, and 284–305; these read NFTS…TNYD, RLVK…QGRN, SITH…DRLS, SVTY…ESCE, WLQY…NKNE, LLLL…LFPN, LNTL…YSNF, NVQT…DFLT, and SIKS…NTSD.

The polypeptide is Leucine-rich repeat domain-containing protein YddK (yddK) (Escherichia coli (strain K12)).